Reading from the N-terminus, the 147-residue chain is D-aminoacyl-tRNA deacylase (147 aa).

The short motif at 136–137 is the Gly-cisPro motif, important for rejection of L-amino acids element; that stretch reads GP.

This sequence belongs to the DTD family. As to quaternary structure, homodimer.

The protein resides in the cytoplasm. The catalysed reaction is glycyl-tRNA(Ala) + H2O = tRNA(Ala) + glycine + H(+). It carries out the reaction a D-aminoacyl-tRNA + H2O = a tRNA + a D-alpha-amino acid + H(+). Functionally, an aminoacyl-tRNA editing enzyme that deacylates mischarged D-aminoacyl-tRNAs. Also deacylates mischarged glycyl-tRNA(Ala), protecting cells against glycine mischarging by AlaRS. Acts via tRNA-based rather than protein-based catalysis; rejects L-amino acids rather than detecting D-amino acids in the active site. By recycling D-aminoacyl-tRNA to D-amino acids and free tRNA molecules, this enzyme counteracts the toxicity associated with the formation of D-aminoacyl-tRNA entities in vivo and helps enforce protein L-homochirality. This Streptococcus pyogenes serotype M6 (strain ATCC BAA-946 / MGAS10394) protein is D-aminoacyl-tRNA deacylase.